Reading from the N-terminus, the 244-residue chain is Small ribosomal subunit protein uS3 (244 aa).

In terms of domain architecture, KH type-2 spans 39-107; it reads VREMLRKKLA…PAHINVTEVR (69 aa). The tract at residues 213–244 is disordered; it reads VGQEKQDDSPRNDRNDRGDRGDRPSRPAREAR. Over residues 216 to 244 the composition is skewed to basic and acidic residues; that stretch reads EKQDDSPRNDRNDRGDRGDRPSRPAREAR.

It belongs to the universal ribosomal protein uS3 family. In terms of assembly, part of the 30S ribosomal subunit. Forms a tight complex with proteins S10 and S14.

Its function is as follows. Binds the lower part of the 30S subunit head. Binds mRNA in the 70S ribosome, positioning it for translation. The sequence is that of Small ribosomal subunit protein uS3 from Xanthomonas axonopodis pv. citri (strain 306).